The chain runs to 454 residues: CBL-interacting protein kinase 4 (454 aa).

Positions 25–284 (YELGRMLGRG…ESLAAHHPWF (260 aa)) constitute a Protein kinase domain. ATP is bound by residues 31–39 (LGRGTFAKV) and K54. The Proton acceptor role is filled by D151. The tract at residues 169-198 (DFGLAALPDTLRDDGRLHTACGTPAYAAPE) is activation loop. The NAF domain maps to 311 to 335 (APPPPLNAFDIISMSPGLDLSGLFG). Residues 341–370 (LREKRFTTTASPEKTLEQLGLAGGKLGYVV) form a PPI region.

Belongs to the protein kinase superfamily. CAMK Ser/Thr protein kinase family. SNF1 subfamily. Mn(2+) is required as a cofactor.

It catalyses the reaction L-seryl-[protein] + ATP = O-phospho-L-seryl-[protein] + ADP + H(+). The enzyme catalyses L-threonyl-[protein] + ATP = O-phospho-L-threonyl-[protein] + ADP + H(+). CIPK serine-threonine protein kinases interact with CBL proteins. Binding of a CBL protein to the regulatory NAF domain of CIPK protein lead to the activation of the kinase in a calcium-dependent manner. This is CBL-interacting protein kinase 4 (CIPK4) from Oryza sativa subsp. japonica (Rice).